Reading from the N-terminus, the 154-residue chain is Ribonuclease 8 (154 aa).

An N-terminal signal peptide occupies residues 1 to 27 (MAPARAGCCALLLLLLGLWVAEIPVSA). The active-site Proton acceptor is the His42. Cystine bridges form between Cys64-Cys118, Cys82-Cys133, and Cys89-Cys96. Residues 65-69 (KDLNT) and Lys90 contribute to the substrate site. Catalysis depends on His149, which acts as the Proton donor.

This sequence belongs to the pancreatic ribonuclease family.

The protein resides in the secreted. In terms of biological role, has a low ribonuclease activity. The sequence is that of Ribonuclease 8 (RNASE8) from Pongo pygmaeus (Bornean orangutan).